The sequence spans 219 residues: Cytidylate kinase (219 aa).

21 to 29 (GPAASGKGT) serves as a coordination point for ATP.

Belongs to the cytidylate kinase family. Type 1 subfamily.

The protein localises to the cytoplasm. It catalyses the reaction CMP + ATP = CDP + ADP. The catalysed reaction is dCMP + ATP = dCDP + ADP. The protein is Cytidylate kinase of Rickettsia conorii (strain ATCC VR-613 / Malish 7).